Reading from the N-terminus, the 397-residue chain is Formate-dependent phosphoribosylglycinamide formyltransferase (397 aa).

N(1)-(5-phospho-beta-D-ribosyl)glycinamide is bound by residues 22–23 (EL) and glutamate 82. ATP contacts are provided by residues arginine 114, lysine 155, 160-165 (SSGKGQ), 195-198 (EGFV), and glutamate 203. The ATP-grasp domain maps to 119–312 (CLAAEELSLP…EFALHARAIL (194 aa)). Residues glutamate 271 and glutamate 283 each coordinate Mg(2+). Residues aspartate 290, lysine 360, and 367-368 (RR) each bind N(1)-(5-phospho-beta-D-ribosyl)glycinamide.

Belongs to the PurK/PurT family. As to quaternary structure, homodimer.

The enzyme catalyses N(1)-(5-phospho-beta-D-ribosyl)glycinamide + formate + ATP = N(2)-formyl-N(1)-(5-phospho-beta-D-ribosyl)glycinamide + ADP + phosphate + H(+). Its pathway is purine metabolism; IMP biosynthesis via de novo pathway; N(2)-formyl-N(1)-(5-phospho-D-ribosyl)glycinamide from N(1)-(5-phospho-D-ribosyl)glycinamide (formate route): step 1/1. In terms of biological role, involved in the de novo purine biosynthesis. Catalyzes the transfer of formate to 5-phospho-ribosyl-glycinamide (GAR), producing 5-phospho-ribosyl-N-formylglycinamide (FGAR). Formate is provided by PurU via hydrolysis of 10-formyl-tetrahydrofolate. In Alcanivorax borkumensis (strain ATCC 700651 / DSM 11573 / NCIMB 13689 / SK2), this protein is Formate-dependent phosphoribosylglycinamide formyltransferase.